The primary structure comprises 275 residues: 2,3,4,5-tetrahydropyridine-2,6-dicarboxylate N-succinyltransferase (275 aa).

Positions 106 and 143 each coordinate substrate.

The protein belongs to the transferase hexapeptide repeat family. As to quaternary structure, homotrimer.

The protein localises to the cytoplasm. The enzyme catalyses (S)-2,3,4,5-tetrahydrodipicolinate + succinyl-CoA + H2O = (S)-2-succinylamino-6-oxoheptanedioate + CoA. It functions in the pathway amino-acid biosynthesis; L-lysine biosynthesis via DAP pathway; LL-2,6-diaminopimelate from (S)-tetrahydrodipicolinate (succinylase route): step 1/3. This chain is 2,3,4,5-tetrahydropyridine-2,6-dicarboxylate N-succinyltransferase, found in Cupriavidus pinatubonensis (strain JMP 134 / LMG 1197) (Cupriavidus necator (strain JMP 134)).